The chain runs to 700 residues: Polyribonucleotide nucleotidyltransferase (700 aa).

2 residues coordinate Mg(2+): Asp-485 and Asp-491. The region spanning 552 to 611 (PRITVIKINPEKIRDVIGKGGAVIRALTEETGTTIELEDDGTVKIASSNGEATKEAIRRI) is the KH domain. Residues 621-689 (GRIYNGKVIR…RQGRVRLSIK (69 aa)) form the S1 motif domain.

It belongs to the polyribonucleotide nucleotidyltransferase family. Component of the RNA degradosome, which is a multiprotein complex involved in RNA processing and mRNA degradation. Mg(2+) serves as cofactor.

It is found in the cytoplasm. The catalysed reaction is RNA(n+1) + phosphate = RNA(n) + a ribonucleoside 5'-diphosphate. Functionally, involved in mRNA degradation. Catalyzes the phosphorolysis of single-stranded polyribonucleotides processively in the 3'- to 5'-direction. The protein is Polyribonucleotide nucleotidyltransferase of Shewanella baltica (strain OS185).